Reading from the N-terminus, the 327-residue chain is Cytochrome c biogenesis protein CcsA (327 aa).

8 helical membrane passes run 13–33 (ISFS…LVNL), 46–66 (GIII…IYSG), 73–93 (LYES…VSYF), 101–121 (LNAI…SGLL), 145–165 (MILG…LLVI), 233–253 (IISL…VWAN), 262–282 (WDPK…YLHI), and 294–314 (AIVA…VNLL).

This sequence belongs to the CcmF/CycK/Ccl1/NrfE/CcsA family. As to quaternary structure, may interact with Ccs1.

Its subcellular location is the plastid. The protein resides in the chloroplast thylakoid membrane. Required during biogenesis of c-type cytochromes (cytochrome c6 and cytochrome f) at the step of heme attachment. In Lobularia maritima (Sweet alyssum), this protein is Cytochrome c biogenesis protein CcsA.